A 162-amino-acid chain; its full sequence is Transcription elongation factor GreA (162 aa).

Positions 45–74 (ENAEYEAAREKQAFIEGRIKELEDMTARAE) form a coiled coil.

The protein belongs to the GreA/GreB family.

In terms of biological role, necessary for efficient RNA polymerase transcription elongation past template-encoded arresting sites. The arresting sites in DNA have the property of trapping a certain fraction of elongating RNA polymerases that pass through, resulting in locked ternary complexes. Cleavage of the nascent transcript by cleavage factors such as GreA or GreB allows the resumption of elongation from the new 3'terminus. GreA releases sequences of 2 to 3 nucleotides. This chain is Transcription elongation factor GreA, found in Rickettsia prowazekii (strain Madrid E).